A 546-amino-acid chain; its full sequence is Light-independent protochlorophyllide reductase subunit B (546 aa).

Residue D36 coordinates [4Fe-4S] cluster. D287 serves as the catalytic Proton donor. Residue G422–L423 coordinates substrate. The disordered stretch occupies residues P443–A501.

The protein belongs to the ChlB/BchB/BchZ family. In terms of assembly, protochlorophyllide reductase is composed of three subunits; BchL, BchN and BchB. Forms a heterotetramer of two BchB and two BchN subunits. Requires [4Fe-4S] cluster as cofactor.

It carries out the reaction chlorophyllide a + oxidized 2[4Fe-4S]-[ferredoxin] + 2 ADP + 2 phosphate = protochlorophyllide a + reduced 2[4Fe-4S]-[ferredoxin] + 2 ATP + 2 H2O. It participates in porphyrin-containing compound metabolism; bacteriochlorophyll biosynthesis (light-independent). In terms of biological role, component of the dark-operative protochlorophyllide reductase (DPOR) that uses Mg-ATP and reduced ferredoxin to reduce ring D of protochlorophyllide (Pchlide) to form chlorophyllide a (Chlide). This reaction is light-independent. The NB-protein (BchN-BchB) is the catalytic component of the complex. The polypeptide is Light-independent protochlorophyllide reductase subunit B (Rhodospirillum rubrum (strain ATCC 11170 / ATH 1.1.1 / DSM 467 / LMG 4362 / NCIMB 8255 / S1)).